Reading from the N-terminus, the 30-residue chain is Glutathione S-transferase (30 aa).

Belongs to the GST superfamily. Monomer and homodimer.

The protein resides in the cytoplasm. The enzyme catalyses RX + glutathione = an S-substituted glutathione + a halide anion + H(+). Conjugation of reduced glutathione to a wide number of exogenous and endogenous hydrophobic electrophiles. This is Glutathione S-transferase from Pseudomonas fluorescens.